Reading from the N-terminus, the 66-residue chain is Large ribosomal subunit protein uL29 (66 aa).

It belongs to the universal ribosomal protein uL29 family.

The chain is Large ribosomal subunit protein uL29 from Ruegeria pomeroyi (strain ATCC 700808 / DSM 15171 / DSS-3) (Silicibacter pomeroyi).